Reading from the N-terminus, the 371-residue chain is uncharacterized protein (371 aa).

The region spanning 20 to 250 (VTIRNVTKRY…PANIFVAGFI (231 aa)) is the ABC transporter domain. ATP is bound at residue 52–59 (GPSGCGKS).

The protein belongs to the ABC transporter superfamily.

The protein resides in the cell inner membrane. Probably part of a binding-protein-dependent transport system y4oPQRS. This system probably transports a sugar-like molecule. Probably responsible for energy coupling to the transport system. This is an uncharacterized protein from Sinorhizobium fredii (strain NBRC 101917 / NGR234).